Here is a 129-residue protein sequence, read N- to C-terminus: MASSVVRATVRAVSKRKIQATRAALTLTPSAVQKIKQLLKDQPEHVGVKVGVRTRGCNGLSYTLEYTKSKGDSDEEVVQDGVRVFIEKKAQLTLLGTEMDYVEDKLSSEFVFNNPNIKGTCGCGESFNI.

Residues 1-12 constitute a mitochondrion transit peptide; sequence MASSVVRATVRA. Cys57, Cys121, and Cys123 together coordinate Fe cation.

This sequence belongs to the HesB/IscA family.

The protein localises to the mitochondrion. Its function is as follows. Involved in the maturation of mitochondrial 4Fe-4S proteins functioning late in the iron-sulfur cluster assembly pathway. Probably involved in the binding of an intermediate of Fe/S cluster assembly. This chain is Iron-sulfur cluster assembly 1 homolog, mitochondrial (ISCA1), found in Gallus gallus (Chicken).